A 1035-amino-acid chain; its full sequence is Unconventional myosin IC (1035 aa).

The 683-residue stretch at 21 to 703 folds into the Myosin motor domain; sequence GVQDFVLLEN…TLFDTEDAYQ (683 aa). An ATP-binding site is contributed by 114-121; that stretch reads GESGSGKT. S304 carries the phosphoserine modification. A Phosphothreonine modification is found at T310. The actin-binding stretch occupies residues 578-600; it reads LNNLMDILMCKEPSYIRCIKPND. IQ domains are found at residues 696–728, 729–751, and 752–779; these read FDTE…KYLK, LRAQ…AAKK, and RREA…FNEE. The 179-residue stretch at 857 to 1035 folds into the TH1 domain; sequence KNNYASSVST…KGHLVIIGTQ (179 aa).

It belongs to the TRAFAC class myosin-kinesin ATPase superfamily. Myosin family. Binds F-actin. As to expression, in the embryo, expressed in gastric caeca, midgut cells of the proventriculus, and in the mid and hindgut. In the larval and adult gut brush border, expressed in the microvilli. Also expressed at high levels in follicle cells during oogenesis.

It localises to the cytoplasm. The protein localises to the cell cortex. It is found in the cell membrane. Functionally, unconventional myosin that functions as actin-based motor protein with ATPase activity. Binds to membranes enriched in phosphatidylinositol 4-5-bisphosphate, and can glide along actin filaments when anchored to a lipid bilayer. Functions as antagonist for Myo31DF, an unconventional myosin with an essential role in the establishment of body left-right asymmetry. This is Unconventional myosin IC (Myo61F) from Drosophila melanogaster (Fruit fly).